A 443-amino-acid polypeptide reads, in one-letter code: Histidinol dehydrogenase (443 aa).

Residues Tyr141, Gln203, and Asn226 each coordinate NAD(+). Ser249, Gln271, and His274 together coordinate substrate. Zn(2+) contacts are provided by Gln271 and His274. Active-site proton acceptor residues include Glu339 and His340. Residues His340, Asp373, Glu427, and His432 each contribute to the substrate site. A Zn(2+)-binding site is contributed by Asp373. His432 contacts Zn(2+).

This sequence belongs to the histidinol dehydrogenase family. The cofactor is Zn(2+).

The catalysed reaction is L-histidinol + 2 NAD(+) + H2O = L-histidine + 2 NADH + 3 H(+). The protein operates within amino-acid biosynthesis; L-histidine biosynthesis; L-histidine from 5-phospho-alpha-D-ribose 1-diphosphate: step 9/9. Catalyzes the sequential NAD-dependent oxidations of L-histidinol to L-histidinaldehyde and then to L-histidine. This Chlorobium luteolum (strain DSM 273 / BCRC 81028 / 2530) (Pelodictyon luteolum) protein is Histidinol dehydrogenase.